Consider the following 200-residue polypeptide: Recombination protein RecR (200 aa).

The segment at 58–75 (CSNCFCLKISQTSPCNFC) adopts a C4-type zinc-finger fold. One can recognise a Toprim domain in the interval 82–177 (SSLCIVATPK…KISRLALGMP (96 aa)).

The protein belongs to the RecR family.

Its function is as follows. May play a role in DNA repair. It seems to be involved in an RecBC-independent recombinational process of DNA repair. It may act with RecF and RecO. The chain is Recombination protein RecR from Chlamydia trachomatis serovar L2 (strain ATCC VR-902B / DSM 19102 / 434/Bu).